The sequence spans 173 residues: MKVYEYDNSTEDQREDHDSGAVVSEAALNEIGVLAYHFDSVDDVNALAAERGYKNRDEVTISPSALGDIYEDKVKAFFHEHLHEDEEIRYILDGEGFFDVRSKDDSWVRIRLSKGDLIILPAGIYHRFTTDKNNYIKAMRLFQEDPKWTPLNRDPLVDENAYRKAYINSLPLA.

The disordered stretch occupies residues 1–20; sequence MKVYEYDNSTEDQREDHDSG. 4 residues coordinate Fe(2+): H81, H83, E87, and H126. Ni(2+)-binding residues include H81, H83, E87, and H126.

Belongs to the acireductone dioxygenase (ARD) family. Requires Fe(2+) as cofactor. It depends on Ni(2+) as a cofactor.

Its subcellular location is the cytoplasm. The protein resides in the nucleus. The enzyme catalyses 1,2-dihydroxy-5-(methylsulfanyl)pent-1-en-3-one + O2 = 4-methylsulfanyl-2-oxobutanoate + formate + 2 H(+). It carries out the reaction 1,2-dihydroxy-5-(methylsulfanyl)pent-1-en-3-one + O2 = 3-(methylsulfanyl)propanoate + CO + formate + 2 H(+). It participates in amino-acid biosynthesis; L-methionine biosynthesis via salvage pathway; L-methionine from S-methyl-5-thio-alpha-D-ribose 1-phosphate: step 5/6. Functionally, catalyzes 2 different reactions between oxygen and the acireductone 1,2-dihydroxy-3-keto-5-methylthiopentene (DHK-MTPene) depending upon the metal bound in the active site. Fe-containing acireductone dioxygenase (Fe-ARD) produces formate and 2-keto-4-methylthiobutyrate (KMTB), the alpha-ketoacid precursor of methionine in the methionine recycle pathway. Ni-containing acireductone dioxygenase (Ni-ARD) produces methylthiopropionate, carbon monoxide and formate, and does not lie on the methionine recycle pathway. The polypeptide is Acireductone dioxygenase (Tuber melanosporum (strain Mel28) (Perigord black truffle)).